The following is a 953-amino-acid chain: Lysosomal alpha-glucosidase (953 aa).

Positions 1-27 are cleaved as a signal peptide; sequence MNIRKPLCSNSVVGACTLVSLTTAVIL. The propeptide occupies 28 to 69; it reads GHLMLRELMLLPQDLHESSSGLWKTYRPHHQESYEPAPLHIQ. In terms of domain architecture, P-type spans 80 to 131; the sequence is TQCDVTPNSRFDCAPDKGITQEQCEARGCCWVPAGQVLNGPVMGQPWCFFPP. Cystine bridges form between Cys82/Cys109, Cys92/Cys108, and Cys103/Cys127. Asn140, Asn233, and Asn390 each carry an N-linked (GlcNAc...) asparagine glycan. A substrate-binding site is contributed by Asp404. N-linked (GlcNAc...) asparagine glycosylation occurs at Asn470. Residue Asp518 is the Nucleophile of the active site. The active site involves Glu521. Cysteines 533 and 558 form a disulfide. The substrate site is built by Arg600 and Asp616. Cysteines 647 and 658 form a disulfide. Asn652 carries N-linked (GlcNAc...) asparagine glycosylation. Residue His674 coordinates substrate. 2 N-linked (GlcNAc...) asparagine glycosylation sites follow: Asn883 and Asn926.

The protein belongs to the glycosyl hydrolase 31 family.

It localises to the lysosome. Its subcellular location is the lysosome membrane. The enzyme catalyses Hydrolysis of terminal, non-reducing (1-&gt;4)-linked alpha-D-glucose residues with release of alpha-D-glucose.. Essential for the degradation of glycogen in lysosomes. Has highest activity on alpha-1,4-linked glycosidic linkages, but can also hydrolyze alpha-1,6-linked glucans. The polypeptide is Lysosomal alpha-glucosidase (Gaa) (Rattus norvegicus (Rat)).